Here is a 161-residue protein sequence, read N- to C-terminus: 4-hydroxybenzoyl-CoA reductase subunit gamma (161 aa).

One can recognise a 2Fe-2S ferredoxin-type domain in the interval 3–79 (NILRLTLNGR…GKKVETVESL (77 aa)). 8 residues coordinate [2Fe-2S] cluster: cysteine 41, cysteine 46, cysteine 49, cysteine 61, cysteine 100, cysteine 103, cysteine 135, and cysteine 137.

Heterohexamer of two alpha, two beta and two gamma subunits. It depends on [2Fe-2S] cluster as a cofactor.

The enzyme catalyses oxidized 2[4Fe-4S]-[ferredoxin] + benzoyl-CoA + H2O = 4-hydroxybenzoyl-CoA + reduced 2[4Fe-4S]-[ferredoxin] + 2 H(+). Its activity is regulated as follows. Inactivated by low concentrations of cyanide in vitro. Component of a complex that catalyzes the reductive dehydroxylation of 4-hydroxybenzoyl-CoA to benzoyl-CoA. Reaction is not reversible. Is a key enzyme in the anaerobic degradation of phenolic compounds. This chain is 4-hydroxybenzoyl-CoA reductase subunit gamma (hcrC), found in Thauera aromatica.